The sequence spans 483 residues: uncharacterized protein (483 aa).

A TRAM domain is found at 11–71 (RYRKGDIIEL…SRYLEARAIE (61 aa)). [4Fe-4S] cluster is bound by residues C84, C90, C93, and C187. S-adenosyl-L-methionine is bound by residues Q312, Y341, E362, and D412. The active-site Nucleophile is the C439.

The protein belongs to the class I-like SAM-binding methyltransferase superfamily. RNA M5U methyltransferase family.

This is an uncharacterized protein from Chlorobaculum tepidum (strain ATCC 49652 / DSM 12025 / NBRC 103806 / TLS) (Chlorobium tepidum).